A 192-amino-acid polypeptide reads, in one-letter code: MFKKILFPLVALFMLAGCAKPPTTIEVSPTITLPQQDPSLMGVTVSINGADQRTDQALAKVTRDNQIVTLTASRDLRFLLQEVLEKQMTARGYMVGPNGPVNLQIIVSQLYADVSQGNVRYNIATKADIAIIATAQNGNKMTKNYRASYNVEGAFQASNKNIADAVNSVLTDTIADMSQDTSIHEFIKQNAR.

A signal peptide spans 1-17; that stretch reads MFKKILFPLVALFMLAG. Residue Cys-18 is the site of N-palmitoyl cysteine attachment. Cys-18 is lipidated: S-diacylglycerol cysteine.

It to H.influenzae HI_0162.

The protein resides in the cell membrane. This is an uncharacterized protein from Escherichia coli O6:H1 (strain CFT073 / ATCC 700928 / UPEC).